The primary structure comprises 190 residues: Probable chemoreceptor glutamine deamidase CheD (190 aa).

Belongs to the CheD family.

The catalysed reaction is L-glutaminyl-[protein] + H2O = L-glutamyl-[protein] + NH4(+). Functionally, probably deamidates glutamine residues to glutamate on methyl-accepting chemotaxis receptors (MCPs), playing an important role in chemotaxis. The polypeptide is Probable chemoreceptor glutamine deamidase CheD (Acidiphilium cryptum (strain JF-5)).